A 325-amino-acid chain; its full sequence is MQYKKPLVVSALAATSLAAYAPKDPWSTLTPSATYKGGITDYSSSFGIAIEAVATSASSVASSKAKRAASQIGDGQVQAATTTAAVSKKSTAAAVSQITDGQVQAAKSTAAAVSQITDGQVQAAKSTAAAVSQITDGQVQAAKSTAAAVSQITDGQVQAAKSTAAAASQISDGQVQATTSTKAAASQITDGQIQASKTTSGASQVSDGQVQATAEVKDANDPVDVVSCNNNSTLSMSLSKGILTDRKGRIGSIVANRQFQFDGPPPQAGAIYAAGWSITPEGNLALGDQDTFYQCLSGDFYNLYDKHIGSQCHEVYLQAIDLIDC.

The N-terminal stretch at 1–18 (MQYKKPLVVSALAATSLA) is a signal peptide. Positions 19 to 67 (AYAPKDPWSTLTPSATYKGGITDYSSSFGIAIEAVATSASSVASSKAKR) are excised as a propeptide. PIR1/2/3 repeat units lie at residues 68–91 (AASQ…KKST), 92–109 (AAAV…AKST), 110–127 (AAAV…AKST), 128–145 (AAAV…AKST), 146–163 (AAAV…AKST), 164–181 (AAAA…TTST), 182–199 (KAAA…SKTT), and 200–217 (SGAS…AEVK).

The protein belongs to the PIR protein family. Post-translationally, covalently linked to beta-1,3-glucan of the inner cell wall layer via an alkali-sensitive ester linkage between the gamma-carboxyl group of glutamic acids, arising from specific glutamines within the PIR1/2/3 repeats, and hydroxyl groups of glucoses of beta-1,3-glucan chains. O-glycosylated. Extensively O-mannosylated.

The protein localises to the secreted. The protein resides in the cell wall. Functionally, component of the outer cell wall layer. Required for stability of the cell wall and for optimal growth. Required for resistance against several antifungal and cell wall-perturbing agents. In Saccharomyces cerevisiae (strain ATCC 204508 / S288c) (Baker's yeast), this protein is Cell wall mannoprotein PIR3 (PIR3).